Here is a 307-residue protein sequence, read N- to C-terminus: 4-hydroxythreonine-4-phosphate dehydrogenase (307 aa).

Positions 126 and 127 each coordinate substrate. 3 residues coordinate a divalent metal cation: His-156, His-195, and His-251. Positions 259, 268, and 277 each coordinate substrate.

The protein belongs to the PdxA family. In terms of assembly, homodimer. Zn(2+) is required as a cofactor. Requires Mg(2+) as cofactor. It depends on Co(2+) as a cofactor.

It is found in the cytoplasm. It catalyses the reaction 4-(phosphooxy)-L-threonine + NAD(+) = 3-amino-2-oxopropyl phosphate + CO2 + NADH. The protein operates within cofactor biosynthesis; pyridoxine 5'-phosphate biosynthesis; pyridoxine 5'-phosphate from D-erythrose 4-phosphate: step 4/5. Functionally, catalyzes the NAD(P)-dependent oxidation of 4-(phosphooxy)-L-threonine (HTP) into 2-amino-3-oxo-4-(phosphooxy)butyric acid which spontaneously decarboxylates to form 3-amino-2-oxopropyl phosphate (AHAP). The sequence is that of 4-hydroxythreonine-4-phosphate dehydrogenase from Helicobacter pylori (strain G27).